The sequence spans 429 residues: Acetyltransferase pyr8 (429 aa).

9 helical membrane passes run 12–32 (IAQELALYLAFTVPTAFVIIT), 39–56 (LRLAWTPCLLYILYRFSL), 69–89 (GVAAGQATVAALQCLNLLLIT), 154–174 (YVLRESAIIIWQYLLLDLIHM), 221–241 (VCLNIVSRIYCLVLVVLRISA), 300–320 (IFFTFFTSAVLHLACDAILGI), 324–344 (GSGAMPFFCVVPLAIMFEDGV), 365–385 (LVGFLWVGSWMYATSPWYLYP), and 409–429 (VAQKVLLVYGVVLYWAIGGEI).

Belongs to the wax synthase family.

It localises to the membrane. Its pathway is secondary metabolite biosynthesis; terpenoid biosynthesis. Its function is as follows. Acetyltransferase; part of the gene cluster that mediates the biosynthesis of pyripyropene A, a specific human acyl-coenzyme A:cholesterol acyltransferase 2 inhibitor. The first step of the pathway is the synthesis of nicotinyl-CoA from nicotinic acid by the nicotinic acid-CoA ligase pyr1. Nicotinyl-CoA is then a substrate of polyketide synthase pyr2 to produce 4-hydroxy-6-(3-pyridinyl)-2H-pyran-2-one (HPPO) which is further prenylated by the polyprenyl transferase pyr6 to yield farnesyl-HPPO. The next steps consist of an epoxidation of farnesyl-HPPO to epoxyfarnesyl-HPPO by FAD-dependent monooxygenase pyr5 and a cyclization of the terpenoid portion by the terpene cyclase pyr4 to yield deacetyl-pyripyropene E. The 2 cytochrome P450 monooxygenases pyr3 and pyr9, and the 2 acetyltransferases pyr7 and pyr8 are involved in the conversion of deacetyl-pyripyropene E into pyripyropene A through several cycles of oxidation and acetylation steps. Pyr7 acetylates deacetyl-pyripyropene E to pyripyropene E which is oxidized to 11-deacetyl-pyripyropene O by pyr3, which is in turn acetylated into pyripyropene O by pyr8. Pyripyropene O is then oxidized to deacetyl-pyripyropene A by pyr9. Deacetyl-pyripyropene A is finally acetylated to pyripyropene A by pyr8. The polypeptide is Acetyltransferase pyr8 (Aspergillus fumigatus (strain ATCC MYA-4609 / CBS 101355 / FGSC A1100 / Af293) (Neosartorya fumigata)).